The following is a 427-amino-acid chain: Trigger factor (427 aa).

Positions 163-248 constitute a PPIase FKBP-type domain; that stretch reads GDTVVIDFVG…IHEVKAKEVP (86 aa).

This sequence belongs to the FKBP-type PPIase family. Tig subfamily.

It localises to the cytoplasm. It catalyses the reaction [protein]-peptidylproline (omega=180) = [protein]-peptidylproline (omega=0). Its function is as follows. Involved in protein export. Acts as a chaperone by maintaining the newly synthesized protein in an open conformation. Functions as a peptidyl-prolyl cis-trans isomerase. This Streptococcus pneumoniae (strain Taiwan19F-14) protein is Trigger factor.